Reading from the N-terminus, the 875-residue chain is Alanine--tRNA ligase (875 aa).

Positions 596, 600, 700, and 704 each coordinate Zn(2+).

This sequence belongs to the class-II aminoacyl-tRNA synthetase family. It depends on Zn(2+) as a cofactor.

The protein resides in the cytoplasm. It catalyses the reaction tRNA(Ala) + L-alanine + ATP = L-alanyl-tRNA(Ala) + AMP + diphosphate. Its function is as follows. Catalyzes the attachment of alanine to tRNA(Ala) in a two-step reaction: alanine is first activated by ATP to form Ala-AMP and then transferred to the acceptor end of tRNA(Ala). Also edits incorrectly charged Ser-tRNA(Ala) and Gly-tRNA(Ala) via its editing domain. This Methanocella arvoryzae (strain DSM 22066 / NBRC 105507 / MRE50) protein is Alanine--tRNA ligase.